The chain runs to 197 residues: Mediator of RNA polymerase II transcription subunit 10 (197 aa).

The interval 1–39 (MSSTAGTRRPRQITPTSPSPSPEPQPGATNGSSSTINVA) is disordered. A compositionally biased stretch (polar residues) spans 27-37 (GATNGSSSTIN).

This sequence belongs to the Mediator complex subunit 10 family. Component of the Mediator complex.

It is found in the nucleus. In terms of biological role, component of the Mediator complex, a coactivator involved in the regulated transcription of nearly all RNA polymerase II-dependent genes. Mediator functions as a bridge to convey information from gene-specific regulatory proteins to the basal RNA polymerase II transcription machinery. Mediator is recruited to promoters by direct interactions with regulatory proteins and serves as a scaffold for the assembly of a functional preinitiation complex with RNA polymerase II and the general transcription factors. In Mycosarcoma maydis (Corn smut fungus), this protein is Mediator of RNA polymerase II transcription subunit 10 (NUT2).